The chain runs to 285 residues: Pyrroline-5-carboxylate reductase (285 aa).

It belongs to the pyrroline-5-carboxylate reductase family. In terms of assembly, homotetramer.

It carries out the reaction L-proline + NADP(+) = (S)-1-pyrroline-5-carboxylate + NADPH + 2 H(+). It catalyses the reaction L-proline + NAD(+) = (S)-1-pyrroline-5-carboxylate + NADH + 2 H(+). The protein operates within amino-acid biosynthesis; L-proline biosynthesis; L-proline from L-glutamate 5-semialdehyde: step 1/1. The polypeptide is Pyrroline-5-carboxylate reductase (Kluyveromyces lactis (strain ATCC 8585 / CBS 2359 / DSM 70799 / NBRC 1267 / NRRL Y-1140 / WM37) (Yeast)).